The primary structure comprises 351 residues: Succinylglutamate desuccinylase (351 aa).

The Zn(2+) site is built by His-73, Glu-76, and His-168. Residue Glu-231 is part of the active site.

The protein belongs to the AspA/AstE family. Succinylglutamate desuccinylase subfamily. Zn(2+) serves as cofactor.

The enzyme catalyses N-succinyl-L-glutamate + H2O = L-glutamate + succinate. It participates in amino-acid degradation; L-arginine degradation via AST pathway; L-glutamate and succinate from L-arginine: step 5/5. In terms of biological role, transforms N(2)-succinylglutamate into succinate and glutamate. The chain is Succinylglutamate desuccinylase from Burkholderia lata (strain ATCC 17760 / DSM 23089 / LMG 22485 / NCIMB 9086 / R18194 / 383).